The following is a 255-amino-acid chain: MRPILIAGNWKMHKTQAEARQFLREFRPALQASSAGVRPQRQIILCVPFTDLAVVVEETRGSGMAVGAQNLHWEDQGAFTGEISGPMLAELGVRYVIVGHSERRQYFGETDETVNRRLAAAQRHGLTPILCVGESLQQREQGLTESWIVGQLDRALPGIDLRNLVIAYEPIWAIGTGKTCAAAEANRVIGLIRQHLGADHLPILYGGSVKASNIDELMAQPQIDGVLVGGASLDPQEFARIVNFQALTPAAAAAP.

Position 9 to 11 (9 to 11) interacts with substrate; sequence NWK. Histidine 100 acts as the Electrophile in catalysis. Catalysis depends on glutamate 169, which acts as the Proton acceptor. Residues glycine 175, serine 208, and 229-230 each bind substrate; that span reads GG.

The protein belongs to the triosephosphate isomerase family. In terms of assembly, homodimer.

It localises to the cytoplasm. It carries out the reaction D-glyceraldehyde 3-phosphate = dihydroxyacetone phosphate. Its pathway is carbohydrate biosynthesis; gluconeogenesis. The protein operates within carbohydrate degradation; glycolysis; D-glyceraldehyde 3-phosphate from glycerone phosphate: step 1/1. Functionally, involved in the gluconeogenesis. Catalyzes stereospecifically the conversion of dihydroxyacetone phosphate (DHAP) to D-glyceraldehyde-3-phosphate (G3P). The chain is Triosephosphate isomerase from Synechococcus sp. (strain JA-3-3Ab) (Cyanobacteria bacterium Yellowstone A-Prime).